Here is a 331-residue protein sequence, read N- to C-terminus: D-alanine--D-alanine ligase (331 aa).

The 203-residue stretch at 112–314 (KRIWRSEGLP…YEDLCLRLLA (203 aa)) folds into the ATP-grasp domain. 138–193 (LQTLGAPMIVKPAREGSTIGLSKVHQAQQCASAYLLAARYDPEVLCEQFIAGDELT) lines the ATP pocket. Mg(2+)-binding residues include Asp267, Glu281, and Asn283.

Belongs to the D-alanine--D-alanine ligase family. The cofactor is Mg(2+). Requires Mn(2+) as cofactor.

The protein resides in the cytoplasm. It carries out the reaction 2 D-alanine + ATP = D-alanyl-D-alanine + ADP + phosphate + H(+). It functions in the pathway cell wall biogenesis; peptidoglycan biosynthesis. Cell wall formation. In Verminephrobacter eiseniae (strain EF01-2), this protein is D-alanine--D-alanine ligase.